Consider the following 197-residue polypeptide: MEHYLSLFIKSVFIENMALSFFLGMCTFLAVSKKVSTAFGLGVAVIFVLGLSVPVNQLVYSLLKDGAIVEGVDLTFLKFITFIGVIAALVQILEMFLDKFVPALYNALGIYLPLITVNCAIFGAVSFMAQREYNFGESVVYGFGAGLGWMLAIVALAGITEKMKYSDAPKGLKGLGITFIAAGLMAMAFMSFSGIQL.

Transmembrane regions (helical) follow at residues 11 to 31 (SVFI…FLAV), 35 to 55 (VSTA…SVPV), 76 to 96 (FLKF…LEMF), 108 to 128 (LGIY…VSFM), 139 to 159 (VVYG…LAGI), and 175 to 195 (LGIT…FSGI).

Belongs to the NqrDE/RnfAE family. Composed of six subunits; NqrA, NqrB, NqrC, NqrD, NqrE and NqrF.

The protein localises to the cell inner membrane. The catalysed reaction is a ubiquinone + n Na(+)(in) + NADH + H(+) = a ubiquinol + n Na(+)(out) + NAD(+). Its function is as follows. NQR complex catalyzes the reduction of ubiquinone-1 to ubiquinol by two successive reactions, coupled with the transport of Na(+) ions from the cytoplasm to the periplasm. NqrA to NqrE are probably involved in the second step, the conversion of ubisemiquinone to ubiquinol. In Neisseria meningitidis serogroup C (strain 053442), this protein is Na(+)-translocating NADH-quinone reductase subunit E.